The sequence spans 201 residues: Holliday junction branch migration complex subunit RuvA (201 aa).

Residues 1 to 63 are domain I; it reads MIEYVRGELA…EDAYVLYGFA (63 aa). A domain II region spans residues 64–142; the sequence is DKQEREIFLL…TMGATVAGGS (79 aa). The segment at 143-151 is flexible linker; it reads ASAGMLLQS. Positions 152–201 are domain III; that stretch reads ASVEVQEEAVAALTMLGFAAAPSQKVVLAILKEEPDAPVEKVIKLALKRL.

Belongs to the RuvA family. Homotetramer. Forms an RuvA(8)-RuvB(12)-Holliday junction (HJ) complex. HJ DNA is sandwiched between 2 RuvA tetramers; dsDNA enters through RuvA and exits via RuvB. An RuvB hexamer assembles on each DNA strand where it exits the tetramer. Each RuvB hexamer is contacted by two RuvA subunits (via domain III) on 2 adjacent RuvB subunits; this complex drives branch migration. In the full resolvosome a probable DNA-RuvA(4)-RuvB(12)-RuvC(2) complex forms which resolves the HJ.

Its subcellular location is the cytoplasm. In terms of biological role, the RuvA-RuvB-RuvC complex processes Holliday junction (HJ) DNA during genetic recombination and DNA repair, while the RuvA-RuvB complex plays an important role in the rescue of blocked DNA replication forks via replication fork reversal (RFR). RuvA specifically binds to HJ cruciform DNA, conferring on it an open structure. The RuvB hexamer acts as an ATP-dependent pump, pulling dsDNA into and through the RuvAB complex. HJ branch migration allows RuvC to scan DNA until it finds its consensus sequence, where it cleaves and resolves the cruciform DNA. This Bacteroides thetaiotaomicron (strain ATCC 29148 / DSM 2079 / JCM 5827 / CCUG 10774 / NCTC 10582 / VPI-5482 / E50) protein is Holliday junction branch migration complex subunit RuvA.